Here is a 1040-residue protein sequence, read N- to C-terminus: Multidrug resistance protein MdtB (1040 aa).

The next 12 membrane-spanning stretches (helical) occupy residues Leu-25–Ala-45, Leu-347–Ala-367, Ile-369–Leu-389, Leu-396–Ile-416, Ile-440–Phe-460, Phe-472–Pro-492, Trp-537–Ile-557, Leu-863–Val-883, Phe-888–Ala-908, Ile-910–Ile-930, Ile-968–Val-988, and Ile-998–Ile-1018.

Belongs to the resistance-nodulation-cell division (RND) (TC 2.A.6) family. MdtB subfamily. Part of a tripartite efflux system composed of MdtA, MdtB and MdtC. MdtB forms a heteromultimer with MdtC.

Its subcellular location is the cell inner membrane. This is Multidrug resistance protein MdtB from Salmonella newport (strain SL254).